The chain runs to 830 residues: MFFKNDSDRGKNAPERGIVPLLPLRDIIVFPHMVSQLFVGRERSIAALDEAMNRGKEIFLAAQRNAKTNDPTPDDIFGVGSVGAIMQLLRLPDGTVKVLIEGKRRARIRRYVQSDAYFLIEYDEIVESSVASVEVEALMRSVQSTFEMYVKLNKKIQPEVLMAVQAIDEASRLADTIIANLPTIKLTDRQALLEMEEPQKRLERLIELMQAEIEILQVEKKIRSRVKKQMEKTQKEYYLNEQMQAIQKELGGGERDEFKNEIQEIEEALKTKRMSKEAAAKVKKELKKLKMMHPTSAEATVVRNYIDWILELPWYDKSEERYDLVEAERILDEDHYGLKKIKERILEYLAVQALTKKLKGPVLCFVGPPGVGKTSLAKSIARATGRKFVRLSLGGVRDEAEIRGHRRTYIGALPGKLIQSLKKVGTNNPVFLLDEVDKMSTDFRGDPAAALLEVLDPEQNHTFNDHYLDLDYDLSDVMFITTANTLSGIPVPLQDRMEVIQLSGYTEFEKLNIAVKYLVPRQRKECGLEDVSLDFTEGALRTIIHHYTKESGVRSLEREIASVCRKVARRVVSDGKEKPIEVVAKSIPKYLGVPKYRLGRREERDEVGLVNGLAVTNVGGDLLPAEATVVPGKGKLVITGLLEKGMEESGHAAMSYVRSRLDRLGLEADVYQKVDVHIHFPDFVRKDGPSAGVTMVTALVSSLMKVPVRRDLAMTGEITLRGRVMPIGGLKEKLLAAHRGGIATVILPKENRKDLRDVPRRVLKALRLVLVEHVDDVLREALILPDAYAIFGPPKGVLEYRDGELVTEAAPVKAPPAAAGEPTPAAPPGA.

The Lon N-terminal domain maps to 19-213; sequence VPLLPLRDII…RLIELMQAEI (195 aa). Residue 367–374 participates in ATP binding; the sequence is GPPGVGKT. Residues 604–784 enclose the Lon proteolytic domain; the sequence is RDEVGLVNGL…DDVLREALIL (181 aa). Catalysis depends on residues serine 690 and lysine 733. A compositionally biased stretch (low complexity) spans 811–823; that stretch reads PVKAPPAAAGEPT. The disordered stretch occupies residues 811–830; that stretch reads PVKAPPAAAGEPTPAAPPGA.

This sequence belongs to the peptidase S16 family. In terms of assembly, homohexamer. Organized in a ring with a central cavity.

It is found in the cytoplasm. It carries out the reaction Hydrolysis of proteins in presence of ATP.. In terms of biological role, ATP-dependent serine protease that mediates the selective degradation of mutant and abnormal proteins as well as certain short-lived regulatory proteins. Required for cellular homeostasis and for survival from DNA damage and developmental changes induced by stress. Degrades polypeptides processively to yield small peptide fragments that are 5 to 10 amino acids long. Binds to DNA in a double-stranded, site-specific manner. This chain is Lon protease 3, found in Sorangium cellulosum (strain So ce56) (Polyangium cellulosum (strain So ce56)).